Reading from the N-terminus, the 301-residue chain is Cardiolipin synthase (CMP-forming) (301 aa).

Residues 70 to 93 (SGAGKAAPRPAAGAGAAAEAPGGQ) are disordered. Over residues 71-93 (GAGKAAPRPAAGAGAAAEAPGGQ) the composition is skewed to low complexity. Transmembrane regions (helical) follow at residues 109 to 129 (IPNMLSMTRIGLAPVLGYLII), 133 to 153 (FNIALGVFALAGLTDLLDGFI), 190 to 212 (IPVPLTYMIISRDVMLIAAVFYV), 250 to 270 (LILVAASLAAPVFNYADSIYL), and 272 to 292 (ILWCFTAFTTAASAYSYYHYG).

It belongs to the CDP-alcohol phosphatidyltransferase class-I family. The cofactor is a divalent metal cation. In terms of tissue distribution, highly expressed in tissues such as heart, skeletal muscle and liver.

Its subcellular location is the mitochondrion inner membrane. The catalysed reaction is a CDP-1,2-diacyl-sn-glycerol + a 1,2-diacyl-sn-glycero-3-phospho-(1'-sn-glycerol) = a cardiolipin + CMP + H(+). Its function is as follows. Catalyzes the synthesis of cardiolipin (CL) (diphosphatidylglycerol) by specifically transferring a phosphatidyl group from CDP-diacylglycerol to phosphatidylglycerol (PG). CL is a key phospholipid in mitochondrial membranes and plays important roles in maintaining the functional integrity and dynamics of mitochondria under both optimal and stress conditions. The protein is Cardiolipin synthase (CMP-forming) (CRLS1) of Homo sapiens (Human).